A 121-amino-acid chain; its full sequence is Large ribosomal subunit protein bL19 (121 aa).

Belongs to the bacterial ribosomal protein bL19 family.

Its function is as follows. This protein is located at the 30S-50S ribosomal subunit interface and may play a role in the structure and function of the aminoacyl-tRNA binding site. This Mesomycoplasma hyopneumoniae (strain 7448) (Mycoplasma hyopneumoniae) protein is Large ribosomal subunit protein bL19.